Consider the following 1624-residue polypeptide: ATP-binding cassette sub-family A member 9 (1624 aa).

The chain crosses the membrane as a helical span at residues 31–51; that stretch reads LLEWLFSFLLVLFLYLFFSNL. N-linked (GlcNAc...) asparagine glycans are attached at residues Asn-120 and Asn-195. The next 6 membrane-spanning stretches (helical) occupy residues 221–243, 269–289, 300–320, 329–349, 354–374, and 398–418; these read VATD…YVSV, SWGL…ALIV, FVMV…LAFL, FLTG…GFPA, LPAF…TVGM, and LIIA…VLTL. One can recognise an ABC transporter 1 domain in the interval 481 to 716; the sequence is IRIKNLKKEY…WGIGYHLSLH (236 aa). 517-524 lines the ATP pocket; the sequence is GHSGAGKT. A helical transmembrane segment spans residues 864 to 884; that stretch reads LWTILLLFGISFIPQLLEHLF. The N-linked (GlcNAc...) asparagine glycan is linked to Asn-949. 6 helical membrane-spanning segments follow: residues 1026-1046, 1065-1085, 1108-1128, 1136-1156, 1163-1183, and 1200-1220; these read TFFW…SSIG, AYWF…LLLM, ILCS…ISFI, SGIW…ATDL, GLFF…LFIF, and EIVY…LFIL. In terms of domain architecture, ABC transporter 2 spans 1288 to 1521; that stretch reads LRKEYAGKKK…FGKDYLLEMK (234 aa). Residue 1326-1333 coordinates ATP; that stretch reads GHNGAGKS.

The protein belongs to the ABC transporter superfamily. ABCA family. In terms of tissue distribution, widely expressed with higher expression in heart.

The protein localises to the membrane. Its function is as follows. Transporter that may play a role in monocyte differentiation and lipid transport and homeostasis. The polypeptide is ATP-binding cassette sub-family A member 9 (ABCA9) (Homo sapiens (Human)).